The following is an 81-amino-acid chain: ATP synthase subunit c, chloroplastic (81 aa).

2 helical membrane passes run 3-23 and 57-77; these read PLISAASVIAAGLAVGLASIG and LAFMEALTIYGLVVALALLFA.

This sequence belongs to the ATPase C chain family. As to quaternary structure, F-type ATPases have 2 components, F(1) - the catalytic core - and F(0) - the membrane proton channel. F(1) has five subunits: alpha(3), beta(3), gamma(1), delta(1), epsilon(1). F(0) has four main subunits: a(1), b(1), b'(1) and c(10-14). The alpha and beta chains form an alternating ring which encloses part of the gamma chain. F(1) is attached to F(0) by a central stalk formed by the gamma and epsilon chains, while a peripheral stalk is formed by the delta, b and b' chains.

It localises to the plastid. Its subcellular location is the chloroplast thylakoid membrane. In terms of biological role, f(1)F(0) ATP synthase produces ATP from ADP in the presence of a proton or sodium gradient. F-type ATPases consist of two structural domains, F(1) containing the extramembraneous catalytic core and F(0) containing the membrane proton channel, linked together by a central stalk and a peripheral stalk. During catalysis, ATP synthesis in the catalytic domain of F(1) is coupled via a rotary mechanism of the central stalk subunits to proton translocation. Its function is as follows. Key component of the F(0) channel; it plays a direct role in translocation across the membrane. A homomeric c-ring of between 10-14 subunits forms the central stalk rotor element with the F(1) delta and epsilon subunits. The sequence is that of ATP synthase subunit c, chloroplastic from Ipomoea purpurea (Common morning glory).